The chain runs to 656 residues: Translation factor GUF1 homolog, mitochondrial (656 aa).

Residues 1-29 (MLAVRRRGLRVLAVAPLRVRGLATTSTEF) constitute a mitochondrion transit peptide. One can recognise a tr-type G domain in the interval 54–238 (ERIRNFSIVA…AVVERLPPPV (185 aa)). GTP-binding positions include 63-70 (AHIDHGKS), 131-135 (DTPGH), and 185-188 (TKID).

This sequence belongs to the TRAFAC class translation factor GTPase superfamily. Classic translation factor GTPase family. LepA subfamily.

The protein localises to the mitochondrion inner membrane. The enzyme catalyses GTP + H2O = GDP + phosphate + H(+). In terms of biological role, promotes mitochondrial protein synthesis. May act as a fidelity factor of the translation reaction, by catalyzing a one-codon backward translocation of tRNAs on improperly translocated ribosomes. Binds to mitochondrial ribosomes in a GTP-dependent manner. The protein is Translation factor GUF1 homolog, mitochondrial of Phytophthora infestans (strain T30-4) (Potato late blight agent).